The sequence spans 293 residues: MPWIQLRIDTDGPHADALSDQLMEEGSISITFEDGKDTPIYEPTLGETPLWNHTVIIALFEADHDLVPVVERLKLLPYLGENFSHKIEQVEDKDWEREWMDNFHPIKFGDRLWICPSWREIPDPTAVNVILDPGLAFGTGTHPTTALCLEWLDGLDYRNKDVIDFGCGSGILAVAALKLGAEKVTGVDIDYQAIEASKANAERNGVEDQLALYLPEDQPEGLIADILVANILAGPLRELAPLIAEKVKPGGQLALSGLLKEQADEVSAFYSQWFEMDAPAHKDDWSRLTGIRK.

Thr145, Gly166, Asp188, and Asn230 together coordinate S-adenosyl-L-methionine.

It belongs to the methyltransferase superfamily. PrmA family.

It is found in the cytoplasm. The catalysed reaction is L-lysyl-[protein] + 3 S-adenosyl-L-methionine = N(6),N(6),N(6)-trimethyl-L-lysyl-[protein] + 3 S-adenosyl-L-homocysteine + 3 H(+). Its function is as follows. Methylates ribosomal protein L11. The sequence is that of Ribosomal protein L11 methyltransferase from Shewanella piezotolerans (strain WP3 / JCM 13877).